A 262-amino-acid polypeptide reads, in one-letter code: Hydroxyethylthiazole kinase (262 aa).

Substrate is bound at residue Met43. Residues Arg118 and Thr164 each coordinate ATP. Ala191 contributes to the substrate binding site.

The protein belongs to the Thz kinase family. Mg(2+) is required as a cofactor.

It carries out the reaction 5-(2-hydroxyethyl)-4-methylthiazole + ATP = 4-methyl-5-(2-phosphooxyethyl)-thiazole + ADP + H(+). The protein operates within cofactor biosynthesis; thiamine diphosphate biosynthesis; 4-methyl-5-(2-phosphoethyl)-thiazole from 5-(2-hydroxyethyl)-4-methylthiazole: step 1/1. Functionally, catalyzes the phosphorylation of the hydroxyl group of 4-methyl-5-beta-hydroxyethylthiazole (THZ). This is Hydroxyethylthiazole kinase from Cereibacter sphaeroides (strain KD131 / KCTC 12085) (Rhodobacter sphaeroides).